Reading from the N-terminus, the 393-residue chain is Protein TsgA (393 aa).

Helical transmembrane passes span 11-31 (WISFLSYALTGALVIVTGMVM), 51-71 (FLNAGILISIFLNAWLMEIVP), 78-98 (FGFILMVLAVAGLMFSHSLAL), 101-121 (AAMFVLGLVSGITMSIGTFLI), 134-154 (LLFTDSFFSMAGMIFPMVAAF), 162-182 (WYWVYACIGLVYLAIFILTFG), 206-226 (IGVLFLAVAALCYILGQLGFI), 245-265 (ALVSDFWMSYMFGMWAFSFIL), 273-293 (ILTVLAGMAAVLMYLFITGTQ), 298-318 (WFILTLGFFSSAIYTSIITLG), 332-352 (FILTCGTIGTMLTFVVTGPIV), and 361-381 (LLTANGLYAVVFVMCFALGFV).

This sequence belongs to the major facilitator superfamily. TsgA family.

It localises to the cell inner membrane. The sequence is that of Protein TsgA from Salmonella heidelberg (strain SL476).